The primary structure comprises 252 residues: Cell division protein ZapD (252 aa).

This sequence belongs to the ZapD family. As to quaternary structure, interacts with FtsZ.

The protein resides in the cytoplasm. Functionally, cell division factor that enhances FtsZ-ring assembly. Directly interacts with FtsZ and promotes bundling of FtsZ protofilaments, with a reduction in FtsZ GTPase activity. In Cupriavidus necator (strain ATCC 17699 / DSM 428 / KCTC 22496 / NCIMB 10442 / H16 / Stanier 337) (Ralstonia eutropha), this protein is Cell division protein ZapD.